An 808-amino-acid polypeptide reads, in one-letter code: Phenylalanine--tRNA ligase beta subunit (808 aa).

Residues 40–149 (RPELDFVKIV…DQAEVGKTIR (110 aa)) enclose the tRNA-binding domain. The region spanning 407–484 (HKEVRIHTDI…RTKGYDTIQV (78 aa)) is the B5 domain. Positions 462, 468, 471, and 472 each coordinate Mg(2+). In terms of domain architecture, FDX-ACB spans 716–808 (SQFPEAEIDL…LAGKNGFVLR (93 aa)).

It belongs to the phenylalanyl-tRNA synthetase beta subunit family. Type 1 subfamily. In terms of assembly, tetramer of two alpha and two beta subunits. Requires Mg(2+) as cofactor.

It is found in the cytoplasm. It carries out the reaction tRNA(Phe) + L-phenylalanine + ATP = L-phenylalanyl-tRNA(Phe) + AMP + diphosphate + H(+). The protein is Phenylalanine--tRNA ligase beta subunit of Leptospira interrogans serogroup Icterohaemorrhagiae serovar Lai (strain 56601).